A 160-amino-acid polypeptide reads, in one-letter code: MSKNKTKKGGDSTIALNKKARHDYFIEDKYEAGLALQGWEVKSLRAGKAHIGDSYVLLQNGEAFLFGATITPLNVASTHVVCDPTRIRKLLLKKSELERLIGLVERQSYTLIPLSMYWSRAWVKVEIGLAKGKKEHDKREDLKEREWQRDKERMMKNKGR.

Residues 133–160 (KKEHDKREDLKEREWQRDKERMMKNKGR) form a disordered region.

It belongs to the SmpB family.

It localises to the cytoplasm. In terms of biological role, required for rescue of stalled ribosomes mediated by trans-translation. Binds to transfer-messenger RNA (tmRNA), required for stable association of tmRNA with ribosomes. tmRNA and SmpB together mimic tRNA shape, replacing the anticodon stem-loop with SmpB. tmRNA is encoded by the ssrA gene; the 2 termini fold to resemble tRNA(Ala) and it encodes a 'tag peptide', a short internal open reading frame. During trans-translation Ala-aminoacylated tmRNA acts like a tRNA, entering the A-site of stalled ribosomes, displacing the stalled mRNA. The ribosome then switches to translate the ORF on the tmRNA; the nascent peptide is terminated with the 'tag peptide' encoded by the tmRNA and targeted for degradation. The ribosome is freed to recommence translation, which seems to be the essential function of trans-translation. This chain is SsrA-binding protein, found in Tolumonas auensis (strain DSM 9187 / NBRC 110442 / TA 4).